The primary structure comprises 582 residues: Hydrazine dehydrogenase (582 aa).

Positions 1-32 (MRKFLKVTLASALIGCGVIGTVSSLMVKEAKA) are cleaved as a signal peptide. Heme c is bound by residues Cys-121, Cys-124, His-125, His-141, Cys-151, Cys-154, His-155, His-159, Cys-170, Cys-175, His-176, His-191, Cys-216, Cys-219, His-220, Cys-227, Cys-230, His-231, His-234, Cys-247, Cys-250, His-251, His-267, Cys-297, Cys-300, His-301, His-306, Cys-342, Cys-345, His-346, His-454, and Tyr-462. The tract at residues 561-582 (GSHSAHHHESGHDPAARSMKEH) is disordered. Residues 567 to 582 (HHESGHDPAARSMKEH) are compositionally biased toward basic and acidic residues.

Homotrimer; subunits are linked by two covalent bonds between Tyr-462 of one subunit and heme P460 of an adjacent subunit. May form 24-mer of an octamer of trimers. Requires heme c as cofactor.

Its subcellular location is the anammoxosome. It carries out the reaction hydrazine + 4 Fe(III)-[cytochrome c] = N2 + 4 Fe(II)-[cytochrome c] + 4 H(+). It participates in nitrogen metabolism. Is strongly and competitively inhibited by NO and hydroxylamine. Its function is as follows. Catalyzes the four-electron oxidation of hydrazine to N2. The electrons derived from hydrazine oxidation may be transferred to the quinone pool and exploited to promote the generation of proton-motive force (pmf) across the anammoxosome membrane. Is involved in anaerobic ammonium oxidation (anammox), a biological process in which nitrite is used as the electron acceptor in the conversion of ammonium to dinitrogen gas (N2) and water; this bacterial process has a major role in the Earth's nitrogen cycle and has been estimated to synthesize up to 50% of the dinitrogen gas emitted into our atmosphere from the oceans. Cannot oxidize hydroxylamine to NO. The chain is Hydrazine dehydrogenase from Kuenenia stuttgartiensis.